We begin with the raw amino-acid sequence, 359 residues long: CCAAT/enhancer-binding protein alpha (359 aa).

Residues 1 to 55 (MESADFYEVEPRPPMSSHLQSPPHAPSNAAFGFPRGAGPAPPPAPPAAPEPLGGI) form a disordered region. The segment at 1-70 (MESADFYEVE…SIDISAYIDP (70 aa)) is required to repress E2F1:TFDP1-mediated transcription, to inhibit cell cycle and to induce adipocyte differentiation. Residues 29-38 (AAFGFPRGAG) are compositionally biased toward low complexity. Positions 39–49 (PAPPPAPPAAP) are enriched in pro residues. The tract at residues 54-72 (GICEHETSIDISAYIDPAA) is required for interaction with TRIB1. The interval 126 to 200 (PPGYGCAAAG…HASPAHLAAP (75 aa)) is required to induce adipocyte differentiation. Lys159 bears the N6-acetyllysine; alternate mark. A Glycyl lysine isopeptide (Lys-Gly) (interchain with G-Cter in SUMO); alternate cross-link involves residue Lys159. A Glycyl lysine isopeptide (Lys-Gly) (interchain with G-Cter in SUMO2); alternate cross-link involves residue Lys159. Disordered regions lie at residues 176-195 (LFPY…ASPA) and 213-293 (TMHL…RERN). Residues 179–191 (YQPPPPPPPPHPH) are compositionally biased toward pro residues. Positions 180–194 (QPPPPPPPPHPHASP) are required to functionally cooperate with SREBF1 in promoter activation. Ser193 is modified (phosphoserine). Over residues 220 to 232 (HPTPPPTPVPSPH) the composition is skewed to pro residues. Thr222 and Thr226 each carry phosphothreonine; by GSK3. Ser230 is modified (phosphoserine; by GSK3). Residues 233 to 255 (AAPALGAAGLPGPGSALKGLAGA) show a composition bias toward low complexity. Residues 240 to 359 (AGLPGPGSAL…SLVKAMGNCA (120 aa)) form an interaction with FOXO1 region. The span at 261–272 (TGGGGGGSGAGA) shows a compositional bias: gly residues. Residues 277–293 (KSVDKNSNEYRVRRERN) show a composition bias toward basic and acidic residues. The bZIP domain occupies 283 to 346 (SNEYRVRRER…DTLRGIFRQL (64 aa)). A DNA-binding region spans residues 286–301 (YRVRRERNNIAVRKSR). A basic motif region spans residues 287–314 (RVRRERNNIAVRKSRDKAKQRNVETQQK). The leucine-zipper stretch occupies residues 318 to 346 (LTSDNDRLRKRVEQLSRELDTLRGIFRQL).

This sequence belongs to the bZIP family. C/EBP subfamily. Binds DNA as a homodimer and as a heterodimer. Can form stable heterodimers with CEBPB, CEBPD, CEBPE and CEBPG. Interacts with PRDM16. Interacts with UBN1. Interacts with ZNF638; this interaction increases transcriptional activation. Interacts with the complex TFDP2:E2F1; the interaction prevents CEBPA binding to target gene promoters and represses its transcriptional activity. Interacts with RB1. Interacts (when phosphorylated at Ser-193) with CDK2, CDK4, E2F4 and SMARCA2. Interacts with SREBPF1. Interacts with FOXO1 (via the Fork-head domain); the interaction increases when FOXO1 is deacetylated. Interacts with SIX1. Interacts (via recognition sequence) with TRIB1. Interacts (via bZIP domain) with OVOL2 (via zinc-finger domains); the interaction inhibits the transcription factor activity of CEBPA and is required to repress adipogenesis. As to quaternary structure, interacts with TAF1A and UBTF. In terms of assembly, interacts with TAF1A and UBTF. Interacts with NPM1. In terms of processing, sumoylated, sumoylation blocks the inhibitory effect on cell proliferation by disrupting the interaction with SMARCA2. Phosphorylation at Ser-193 is required for interaction with CDK2, CDK4 and SWI/SNF complex leading to cell cycle inhibition. Dephosphorylated at Ser-193 by protein phosphatase 2A (PP2A) through PI3K/AKT signaling pathway regulation. Phosphorylation at Thr-222 and Thr-226 by GSK3 is constitutive in adipose tissue and lung. In liver, both Thr-222 and Thr-226 are phosphorylated only during feeding but not during fasting. Phosphorylation of the GSK3 consensus sites selectively decreases transactivation activity on IRE-controlled promoters. Post-translationally, ubiquitinated by COP1 upon interaction with TRIB1. As to expression, isoform 2 and isoform 3 are expressed in adipose tissue and liver (at protein level).

The protein resides in the nucleus. The protein localises to the nucleolus. Transcription factor that coordinates proliferation arrest and the differentiation of myeloid progenitors, adipocytes, hepatocytes, and cells of the lung and the placenta. Binds directly to the consensus DNA sequence 5'-T[TG]NNGNAA[TG]-3' acting as an activator on distinct target genes. During early embryogenesis, plays essential and redundant functions with CEBPB. Essential for the transition from common myeloid progenitors (CMP) to granulocyte/monocyte progenitors (GMP). Critical for the proper development of the liver and the lung. Necessary for terminal adipocyte differentiation, is required for postnatal maintenance of systemic energy homeostasis and lipid storage. To regulate these different processes at the proper moment and tissue, interplays with other transcription factors and modulators. Down-regulates the expression of genes that maintain cells in an undifferentiated and proliferative state through E2F1 repression, which is critical for its ability to induce adipocyte and granulocyte terminal differentiation. Reciprocally E2F1 blocks adipocyte differentiation by binding to specific promoters and repressing CEBPA binding to its target gene promoters. Proliferation arrest also depends on a functional binding to SWI/SNF complex. In liver, regulates gluconeogenesis and lipogenesis through different mechanisms. To regulate gluconeogenesis, functionally cooperates with FOXO1 binding to IRE-controlled promoters and regulating the expression of target genes such as PCK1 or G6PC1. To modulate lipogenesis, interacts and transcriptionally synergizes with SREBF1 in promoter activation of specific lipogenic target genes such as ACAS2. In adipose tissue, seems to act as FOXO1 coactivator accessing to ADIPOQ promoter through FOXO1 binding sites. Its function is as follows. Can act as dominant-negative. Binds DNA and have transctivation activity, even if much less efficiently than isoform 2. Does not inhibit cell proliferation. Functionally, directly and specifically enhances ribosomal DNA transcription interacting with RNA polymerase I-specific cofactors and inducing histone acetylation. This is CCAAT/enhancer-binding protein alpha from Mus musculus (Mouse).